Here is a 375-residue protein sequence, read N- to C-terminus: Ribosomal RNA large subunit methyltransferase G (375 aa).

This sequence belongs to the methyltransferase superfamily. RlmG family.

It is found in the cytoplasm. The catalysed reaction is guanosine(1835) in 23S rRNA + S-adenosyl-L-methionine = N(2)-methylguanosine(1835) in 23S rRNA + S-adenosyl-L-homocysteine + H(+). Its function is as follows. Specifically methylates the guanine in position 1835 (m2G1835) of 23S rRNA. This Stutzerimonas stutzeri (strain A1501) (Pseudomonas stutzeri) protein is Ribosomal RNA large subunit methyltransferase G.